A 354-amino-acid polypeptide reads, in one-letter code: Biotin synthase (354 aa).

Residues 41–268 form the Radical SAM core domain; it reads NEVQISRLLS…LSRVRLSAGR (228 aa). Residues Cys-56, Cys-60, and Cys-63 each contribute to the [4Fe-4S] cluster site. Positions 100, 131, 191, and 263 each coordinate [2Fe-2S] cluster.

Belongs to the radical SAM superfamily. Biotin synthase family. In terms of assembly, homodimer. [4Fe-4S] cluster is required as a cofactor. Requires [2Fe-2S] cluster as cofactor.

It carries out the reaction (4R,5S)-dethiobiotin + (sulfur carrier)-SH + 2 reduced [2Fe-2S]-[ferredoxin] + 2 S-adenosyl-L-methionine = (sulfur carrier)-H + biotin + 2 5'-deoxyadenosine + 2 L-methionine + 2 oxidized [2Fe-2S]-[ferredoxin]. The protein operates within cofactor biosynthesis; biotin biosynthesis; biotin from 7,8-diaminononanoate: step 2/2. Its function is as follows. Catalyzes the conversion of dethiobiotin (DTB) to biotin by the insertion of a sulfur atom into dethiobiotin via a radical-based mechanism. This is Biotin synthase from Shewanella amazonensis (strain ATCC BAA-1098 / SB2B).